Reading from the N-terminus, the 361-residue chain is Pyruvate dehydrogenase E1 component subunit beta, mitochondrial (361 aa).

The N-terminal 27 residues, 1–27 (MAVNGCMRLLRNGLTSACALEQSVRRL), are a transit peptide targeting the mitochondrion. E90 lines the thiamine diphosphate pocket. Residues I143, A191, V192, D194, and N196 each coordinate K(+).

In terms of assembly, heterotetramer of two PDHA1 and two PDHB subunits. The heterotetramer interacts with DLAT, and is part of the multimeric pyruvate dehydrogenase complex that contains multiple copies of pyruvate dehydrogenase (E1), dihydrolipoamide acetyltransferase (DLAT, E2) and lipoamide dehydrogenase (DLD, E3). Thiamine diphosphate is required as a cofactor.

It localises to the mitochondrion matrix. The enzyme catalyses N(6)-[(R)-lipoyl]-L-lysyl-[protein] + pyruvate + H(+) = N(6)-[(R)-S(8)-acetyldihydrolipoyl]-L-lysyl-[protein] + CO2. Its function is as follows. The pyruvate dehydrogenase complex catalyzes the overall conversion of pyruvate to acetyl-CoA and CO(2), and thereby links the glycolytic pathway to the tricarboxylic cycle. The polypeptide is Pyruvate dehydrogenase E1 component subunit beta, mitochondrial (Ascaris suum (Pig roundworm)).